We begin with the raw amino-acid sequence, 133 residues long: Large ribosomal subunit protein bL17 (133 aa).

Belongs to the bacterial ribosomal protein bL17 family. In terms of assembly, part of the 50S ribosomal subunit. Contacts protein L32.

The polypeptide is Large ribosomal subunit protein bL17 (Ehrlichia chaffeensis (strain ATCC CRL-10679 / Arkansas)).